Consider the following 63-residue polypeptide: Large ribosomal subunit protein bL32 (63 aa).

It belongs to the bacterial ribosomal protein bL32 family.

The polypeptide is Large ribosomal subunit protein bL32 (rpmF) (Aquifex aeolicus (strain VF5)).